We begin with the raw amino-acid sequence, 747 residues long: Beta-glucosidase BoGH3A (747 aa).

The N-terminal stretch at 1 to 26 (MIIGIMKTFLLTICFLSVQTGMVAIA) is a signal peptide. D273 is an active-site residue.

This sequence belongs to the glycosyl hydrolase 3 family.

The protein localises to the periplasm. The catalysed reaction is Hydrolysis of terminal, non-reducing beta-D-glucosyl residues with release of beta-D-glucose.. The protein operates within glucan metabolism; xyloglucan degradation. Catalyzes the hydrolysis of terminal, non-reducing beta-D-glucosyl residues with release of beta-D-glucose in xyloglucan degradation, leading to remove the backbone 'G' units. In Bacteroides ovatus (strain ATCC 8483 / DSM 1896 / JCM 5824 / BCRC 10623 / CCUG 4943 / NCTC 11153), this protein is Beta-glucosidase BoGH3A.